The primary structure comprises 362 residues: 5'-tyrosyl-DNA phosphodiesterase (362 aa).

Positions 1–10 are enriched in acidic residues; sequence MSNSDDEIQE. A disordered region spans residues 1 to 43; sequence MSNSDDEIQEIEAKRQKMSQEDSEVEIEILDEPEQGKLKNSSM. Over residues 11-20 the composition is skewed to basic and acidic residues; sequence IEAKRQKMSQ. Residues 21–33 show a composition bias toward acidic residues; the sequence is EDSEVEIEILDEP. The interval 126-130 is interaction with 5' end of substrate DNA; sequence NIDGL. The Mg(2+) site is built by aspartate 128 and glutamate 158. Residues 232 to 237 are interaction with 5' end of substrate DNA; that stretch reads HLESTR. The Proton donor/acceptor role is filled by aspartate 271. The tract at residues 273–275 is interaction with 5' end of substrate DNA; the sequence is NLR.

It belongs to the CCR4/nocturin family. TTRAP/TDP2 subfamily. As to quaternary structure, interacts with mxl-1; the interaction promotes axon regeneration after injury. Interacts with ets-4; the interaction is required for the sumoylation of ets-4. It depends on Mg(2+) as a cofactor. Mn(2+) serves as cofactor.

It is found in the nucleus. Its subcellular location is the PML body. Functionally, DNA repair enzyme that can remove a variety of covalent adducts from DNA through hydrolysis of a 5'-phosphodiester bond, giving rise to DNA with a free 5' phosphate. Catalyzes the hydrolysis of dead-end complexes between DNA and the topoisomerase 2 (top2) active site tyrosine residue. Hydrolyzes 5'-phosphoglycolates on protruding 5' ends on DNA double-strand breaks (DSBs) due to DNA damage by radiation and free radicals. Inhibits axon regeneration after neuronal injury by promoting the sumoylation of ets-4, thereby inhibiting the phosphorylation of ets-4 required for probable interaction with cebp-1 and activation of svh-2 expression. The chain is 5'-tyrosyl-DNA phosphodiesterase from Caenorhabditis elegans.